Reading from the N-terminus, the 276-residue chain is Rhomboid protease GlpG (276 aa).

Transmembrane regions (helical) follow at residues 94–114 (GPFTWAILLICIAVFILQNLL), 142–162 (AFMHFSLMHILFNLLWWWYLG), 169–189 (IGSGKLVVITVISALLSGFVQ), 192–212 (FSGPWFGGLSGVVYALMGYVW), 229–249 (LILFSLVWLIAGWFDVFGMAI), and 252–272 (GAHVAGLATGLAMAFVDTLHG). The active-site Nucleophile is S201. H254 is a catalytic residue.

Belongs to the peptidase S54 family.

It localises to the cell inner membrane. It carries out the reaction Cleaves type-1 transmembrane domains using a catalytic dyad composed of serine and histidine that are contributed by different transmembrane domains.. Functionally, rhomboid-type serine protease that catalyzes intramembrane proteolysis. This chain is Rhomboid protease GlpG, found in Klebsiella pneumoniae subsp. pneumoniae (strain ATCC 700721 / MGH 78578).